We begin with the raw amino-acid sequence, 548 residues long: Membrane protein insertase YidC (548 aa).

5 consecutive transmembrane segments (helical) span residues 6–26 (NLIL…WESD), 357–377 (NWGV…FPLT), 424–444 (LGGC…YWAL), 455–475 (FALW…PILM), and 503–523 (PIIF…YWLV).

Belongs to the OXA1/ALB3/YidC family. Type 1 subfamily. In terms of assembly, interacts with the Sec translocase complex via SecD. Specifically interacts with transmembrane segments of nascent integral membrane proteins during membrane integration.

It localises to the cell inner membrane. Its function is as follows. Required for the insertion and/or proper folding and/or complex formation of integral membrane proteins into the membrane. Involved in integration of membrane proteins that insert both dependently and independently of the Sec translocase complex, as well as at least some lipoproteins. Aids folding of multispanning membrane proteins. The sequence is that of Membrane protein insertase YidC from Aeromonas hydrophila subsp. hydrophila (strain ATCC 7966 / DSM 30187 / BCRC 13018 / CCUG 14551 / JCM 1027 / KCTC 2358 / NCIMB 9240 / NCTC 8049).